The chain runs to 295 residues: DQEIVVKSMAMEKVYELACRVADSDATIFLQGETGVGKEVLARTIHNSSIRKEAPFIKVNCGAIPESIMESELFGYSKGTFTGGNKDGKKGLAQAAHNGTLFLDEIGELPLNLQAKLLQLLNEKQFTPLGEIKPVQVDVRFIAATNRNLEDMVREGTFREDLYYRLFVIPITIPSLSERREDIPFLINHFLETFNHKYKLYKTIDKEVVQFFIDYEWKGNVRELQNTIERLVLISSAQQIELSDLSDKFKKATSHTKGGISGEGLNLKQKMEQFEKQILIQTLESSNTMKEASKN.

The 230-residue stretch at 4 to 233 (IVVKSMAMEK…LQNTIERLVL (230 aa)) folds into the Sigma-54 factor interaction domain.

This is an uncharacterized protein from Pseudomonas sp. (strain NS671).